The following is a 419-amino-acid chain: Transcription termination factor Rho (419 aa).

Residues 48 to 123 (DIFGDGVLEI…LKVNKVNYDK (76 aa)) enclose the Rho RNA-BD domain. RNA-binding stretches follow at residues 61–66 (GFGFLR), 78–80 (DIY), and 108–110 (ERY). Residues 169-174 (GRGQRG), 181-186 (KAGKTM), and Arg212 contribute to the ATP site. Positions 284-288 (VLTGG) are RNA-binding 2.

The protein belongs to the Rho family. In terms of assembly, homohexamer. The homohexamer assembles into an open ring structure.

Functionally, facilitates transcription termination by a mechanism that involves Rho binding to the nascent RNA, activation of Rho's RNA-dependent ATPase activity, and release of the mRNA from the DNA template. The chain is Transcription termination factor Rho from Buchnera aphidicola subsp. Baizongia pistaciae (strain Bp).